The sequence spans 141 residues: Hemoglobin subunit alpha-1/2 (141 aa).

Positions Val1–Arg141 constitute a Globin domain. Ser3 bears the Phosphoserine mark. Lys7 and Lys11 each carry N6-succinyllysine. An N6-acetyllysine; alternate modification is found at Lys16. Lys16 is modified (N6-succinyllysine; alternate). Phosphotyrosine is present on Tyr24. Ser35 is modified (phosphoserine). Lys40 is subject to N6-succinyllysine. The residue at position 49 (Ser49) is a Phosphoserine. His58 is a binding site for O2. Heme b is bound at residue His87. Residue Ser102 is modified to Phosphoserine. A Phosphothreonine modification is found at Thr108. Ser124 is subject to Phosphoserine. 2 positions are modified to phosphothreonine: Thr134 and Thr137. Residue Ser138 is modified to Phosphoserine.

This sequence belongs to the globin family. In terms of assembly, heterotetramer of two alpha chains and two beta chains. As to expression, red blood cells.

Involved in oxygen transport from the lung to the various peripheral tissues. The sequence is that of Hemoglobin subunit alpha-1/2 from Odocoileus virginianus virginianus (Virginia white-tailed deer).